The sequence spans 247 residues: Probable membrane transporter protein y4hK (247 aa).

A run of 6 helical transmembrane segments spans residues 5–25 (AIGLAIAFFVIALAYAAVGQA), 31–51 (IAAMALSGFSPLAIKPTALAL), 74–94 (VYPFAILGFPASALGGSVHLP), 121–141 (SALVITIPKTPPLHAALITGA), 202–222 (FLPWWLIAVAAGGSIGALIGS), and 227–247 (ASWLRVILSVLLMVSGLKLLW).

The protein belongs to the 4-toluene sulfonate uptake permease (TSUP) (TC 2.A.102) family.

It localises to the cell membrane. This Sinorhizobium fredii (strain NBRC 101917 / NGR234) protein is Probable membrane transporter protein y4hK.